The following is a 308-amino-acid chain: Methionyl-tRNA formyltransferase (308 aa).

109–112 (SLLP) contacts (6S)-5,6,7,8-tetrahydrofolate.

This sequence belongs to the Fmt family.

The catalysed reaction is L-methionyl-tRNA(fMet) + (6R)-10-formyltetrahydrofolate = N-formyl-L-methionyl-tRNA(fMet) + (6S)-5,6,7,8-tetrahydrofolate + H(+). In terms of biological role, attaches a formyl group to the free amino group of methionyl-tRNA(fMet). The formyl group appears to play a dual role in the initiator identity of N-formylmethionyl-tRNA by promoting its recognition by IF2 and preventing the misappropriation of this tRNA by the elongation apparatus. The sequence is that of Methionyl-tRNA formyltransferase from Methylobacillus flagellatus (strain ATCC 51484 / DSM 6875 / VKM B-1610 / KT).